Here is a 689-residue protein sequence, read N- to C-terminus: Glycine--tRNA ligase beta subunit (689 aa).

It belongs to the class-II aminoacyl-tRNA synthetase family. In terms of assembly, tetramer of two alpha and two beta subunits.

Its subcellular location is the cytoplasm. The catalysed reaction is tRNA(Gly) + glycine + ATP = glycyl-tRNA(Gly) + AMP + diphosphate. This Aeromonas hydrophila subsp. hydrophila (strain ATCC 7966 / DSM 30187 / BCRC 13018 / CCUG 14551 / JCM 1027 / KCTC 2358 / NCIMB 9240 / NCTC 8049) protein is Glycine--tRNA ligase beta subunit.